Reading from the N-terminus, the 154-residue chain is Transcriptional repressor NrdR (154 aa).

A zinc finger spans residues 3–34 (CPFCRHSDSRVIDSRETDEGQAIRRRRSCPEC). An ATP-cone domain is found at 46-136 (VAVVKRSGVT…VYRSFSSADD (91 aa)).

It belongs to the NrdR family. Zn(2+) serves as cofactor.

In terms of biological role, negatively regulates transcription of bacterial ribonucleotide reductase nrd genes and operons by binding to NrdR-boxes. The protein is Transcriptional repressor NrdR of Mycobacterium leprae (strain Br4923).